The following is a 157-amino-acid chain: AKNNQQSGKSQSIVVGTWGAEVTSGVAFDDGSYTGIREINFEYNNETAIGSIQVTYDVDGTPFEAKKHASFITGFTPVKISLDFPSEYIVEVSGYTGKVSGYLVVRSLTFKTNKETYGPYGVTSGTHFKLPIQDGLIVGFKGSVGYWLDYIGFHLAL.

The region spanning 12–157 (SIVVGTWGAE…LDYIGFHLAL (146 aa)) is the Jacalin-type lectin domain. Asn45 is a glycosylation site (N-linked (GlcNAc...) asparagine).

Belongs to the jacalin lectin family. Tetramer of heterodimers of light and heavy chains which are non-covalently linked. In terms of processing, N-linked carbohydrates at Asn-45 can be of complex or paucimannose type.

Its function is as follows. Alpha-D-galactose-specific lectin. Has hemagglutinating activity towards human and rabbit erythrocytes. Is highly cytotoxic to human cells in vitro. The chain is Galactose-specific lectin from Morus indica (Mulberry).